A 363-amino-acid chain; its full sequence is NAD(P)H-quinone oxidoreductase subunit 1, chloroplastic (363 aa).

9 helical membrane-spanning segments follow: residues 30-50, 98-118, 129-149, 165-185, 203-223, 248-268, 269-289, 300-320, and 334-354; these read LVPI…IVWL, FSIG…VIPF, IGVF…LMSG, AAQS…ISLL, LWGW…ISSL, YSGI…LVSS, LFVT…IFVP, VFGT…FLFI, and DQLL…NLLL.

This sequence belongs to the complex I subunit 1 family. NDH is composed of at least 16 different subunits, 5 of which are encoded in the nucleus.

It is found in the plastid. It localises to the chloroplast thylakoid membrane. It catalyses the reaction a plastoquinone + NADH + (n+1) H(+)(in) = a plastoquinol + NAD(+) + n H(+)(out). The catalysed reaction is a plastoquinone + NADPH + (n+1) H(+)(in) = a plastoquinol + NADP(+) + n H(+)(out). Functionally, NDH shuttles electrons from NAD(P)H:plastoquinone, via FMN and iron-sulfur (Fe-S) centers, to quinones in the photosynthetic chain and possibly in a chloroplast respiratory chain. The immediate electron acceptor for the enzyme in this species is believed to be plastoquinone. Couples the redox reaction to proton translocation, and thus conserves the redox energy in a proton gradient. This is NAD(P)H-quinone oxidoreductase subunit 1, chloroplastic from Oenothera elata subsp. hookeri (Hooker's evening primrose).